Reading from the N-terminus, the 408-residue chain is MWPQVIPGSKSITNRALILAALAAGPSTIHGVLRSRDTDLMADALRSMGVTITEEAPDRYHVEPPAELSSGSIDCGLAGTVMRFVPPVAAFADGPVHFDGDEQARIRPMTSILDALRTLGVRVENNRLPFTVTSDGIPEGGVVEIDASASSQFVSGLLLSAPRFVNGVTVRHIGGRLPSMPHIEMTVAMLREVGIRVDVTPNQWTVHPGEIRGHTWRIEPDLSNATPFLAAAAVTRGTVTVRNWPRDTTQPGDSIRSILEDMGCTVEFISNGATFDLEVTGPAELKGIHLDMSDIGELTPTVAALAALATTESRLTGIAHLRGHETNRLEALTAEINRLGGNCTELDDGLHITPAPLHGGVWHSYADHRMATAGAIIGLVIKDVGVEDIQTTSKTFPGFETLWEEMVG.

The 3-phosphoshikimate site is built by lysine 10, serine 11, and arginine 15. Residue lysine 10 coordinates phosphoenolpyruvate. Phosphoenolpyruvate is bound by residues glycine 79 and arginine 107. 6 residues coordinate 3-phosphoshikimate: serine 150, serine 151, glutamine 152, serine 179, glutamate 297, and histidine 324. Residue glutamine 152 coordinates phosphoenolpyruvate. Glutamate 297 functions as the Proton acceptor in the catalytic mechanism. Phosphoenolpyruvate is bound by residues arginine 328, arginine 369, and lysine 394.

The protein belongs to the EPSP synthase family. As to quaternary structure, monomer.

The protein resides in the cytoplasm. It carries out the reaction 3-phosphoshikimate + phosphoenolpyruvate = 5-O-(1-carboxyvinyl)-3-phosphoshikimate + phosphate. Its pathway is metabolic intermediate biosynthesis; chorismate biosynthesis; chorismate from D-erythrose 4-phosphate and phosphoenolpyruvate: step 6/7. Catalyzes the transfer of the enolpyruvyl moiety of phosphoenolpyruvate (PEP) to the 5-hydroxyl of shikimate-3-phosphate (S3P) to produce enolpyruvyl shikimate-3-phosphate and inorganic phosphate. This Corynebacterium efficiens (strain DSM 44549 / YS-314 / AJ 12310 / JCM 11189 / NBRC 100395) protein is 3-phosphoshikimate 1-carboxyvinyltransferase.